Here is a 121-residue protein sequence, read N- to C-terminus: Large ribosomal subunit protein uL14c (121 aa).

It belongs to the universal ribosomal protein uL14 family. As to quaternary structure, part of the 50S ribosomal subunit.

Its subcellular location is the plastid. It localises to the chloroplast. Binds to 23S rRNA. This chain is Large ribosomal subunit protein uL14c, found in Pelargonium hortorum (Common geranium).